The chain runs to 941 residues: Bifunctional glutamine synthetase adenylyltransferase/adenylyl-removing enzyme (941 aa).

The adenylyl removase stretch occupies residues 1–437; it reads MSIPTASLSP…TAEFAELLAP (437 aa). Positions 444 to 941 are adenylyl transferase; that stretch reads PDTLADYWRA…FPLGKDEAAL (498 aa).

It belongs to the GlnE family. It depends on Mg(2+) as a cofactor.

It carries out the reaction [glutamine synthetase]-O(4)-(5'-adenylyl)-L-tyrosine + phosphate = [glutamine synthetase]-L-tyrosine + ADP. The enzyme catalyses [glutamine synthetase]-L-tyrosine + ATP = [glutamine synthetase]-O(4)-(5'-adenylyl)-L-tyrosine + diphosphate. Functionally, involved in the regulation of glutamine synthetase GlnA, a key enzyme in the process to assimilate ammonia. When cellular nitrogen levels are high, the C-terminal adenylyl transferase (AT) inactivates GlnA by covalent transfer of an adenylyl group from ATP to specific tyrosine residue of GlnA, thus reducing its activity. Conversely, when nitrogen levels are low, the N-terminal adenylyl removase (AR) activates GlnA by removing the adenylyl group by phosphorolysis, increasing its activity. The regulatory region of GlnE binds the signal transduction protein PII (GlnB) which indicates the nitrogen status of the cell. The sequence is that of Bifunctional glutamine synthetase adenylyltransferase/adenylyl-removing enzyme from Xanthomonas oryzae pv. oryzae (strain MAFF 311018).